A 310-amino-acid polypeptide reads, in one-letter code: Protein-L-isoaspartate O-methyltransferase (310 aa).

Disordered stretches follow at residues 1–42 and 64–90; these read MSGE…AADK and SAAA…APSV. Residues 14 to 32 show a composition bias toward basic and acidic residues; that stretch reads EDLKRAPRKSEGRAGERHA. Residues 64-81 show a composition bias toward low complexity; the sequence is SAAAKPATAPKPTALKPA. The active site involves Ser-157.

The protein belongs to the methyltransferase superfamily. L-isoaspartyl/D-aspartyl protein methyltransferase family.

The protein localises to the cytoplasm. It carries out the reaction [protein]-L-isoaspartate + S-adenosyl-L-methionine = [protein]-L-isoaspartate alpha-methyl ester + S-adenosyl-L-homocysteine. In terms of biological role, catalyzes the methyl esterification of L-isoaspartyl residues in peptides and proteins that result from spontaneous decomposition of normal L-aspartyl and L-asparaginyl residues. It plays a role in the repair and/or degradation of damaged proteins. The chain is Protein-L-isoaspartate O-methyltransferase from Burkholderia lata (strain ATCC 17760 / DSM 23089 / LMG 22485 / NCIMB 9086 / R18194 / 383).